The primary structure comprises 534 residues: CTP synthase (534 aa).

Residues 1–267 are amidoligase domain; the sequence is MTKYIFVTGG…DQIVCDHLKL (267 aa). Serine 13 lines the CTP pocket. Serine 13 is a binding site for UTP. Residue 14–19 coordinates ATP; it reads SIGKGI. Position 54 (tyrosine 54) interacts with L-glutamine. Residue aspartate 71 coordinates ATP. Mg(2+) contacts are provided by aspartate 71 and glutamate 141. CTP-binding positions include 148-150, 188-193, and lysine 224; these read DIE and KTKPTQ. UTP contacts are provided by residues 188 to 193 and lysine 224; that span reads KTKPTQ. 240–242 is an ATP binding site; that stretch reads RNV. The region spanning 292–534 is the Glutamine amidotransferase type-1 domain; sequence KIALVGKYVE…FVTAAIKNSN (243 aa). Glycine 354 provides a ligand contact to L-glutamine. Cysteine 381 serves as the catalytic Nucleophile; for glutamine hydrolysis. Residues 382–385, glutamate 405, and arginine 463 contribute to the L-glutamine site; that span reads LGMQ. Catalysis depends on residues histidine 508 and glutamate 510.

It belongs to the CTP synthase family. Homotetramer.

It catalyses the reaction UTP + L-glutamine + ATP + H2O = CTP + L-glutamate + ADP + phosphate + 2 H(+). The catalysed reaction is L-glutamine + H2O = L-glutamate + NH4(+). The enzyme catalyses UTP + NH4(+) + ATP = CTP + ADP + phosphate + 2 H(+). It functions in the pathway pyrimidine metabolism; CTP biosynthesis via de novo pathway; CTP from UDP: step 2/2. With respect to regulation, allosterically activated by GTP, when glutamine is the substrate; GTP has no effect on the reaction when ammonia is the substrate. The allosteric effector GTP functions by stabilizing the protein conformation that binds the tetrahedral intermediate(s) formed during glutamine hydrolysis. Inhibited by the product CTP, via allosteric rather than competitive inhibition. Functionally, catalyzes the ATP-dependent amination of UTP to CTP with either L-glutamine or ammonia as the source of nitrogen. Regulates intracellular CTP levels through interactions with the four ribonucleotide triphosphates. This Streptococcus pyogenes serotype M28 (strain MGAS6180) protein is CTP synthase.